We begin with the raw amino-acid sequence, 221 residues long: MRSQLSLMGKKEGMIHVFDKDGNLVACSVISMSPNVVSQIKVDSTDGYNAIQMGADEISVPEKTLQKRVNKPILGHFKKSGSRVFRTLKEVRVSEDAVNEASLGSEFGLEVFEDVSSVDISGVSKGKGFQGVMKKFGFRGGPKTHGSGFHRHAGSIGMRSTPGRCFPGSKRPSHMGAVNVTIKNLEVIKIDLEKKVLLVKGAIPGPRGSVVVVRRSSRAKA.

Belongs to the universal ribosomal protein uL3 family. Part of the 50S ribosomal subunit. Forms a cluster with proteins L14 and L19.

Its function is as follows. One of the primary rRNA binding proteins, it binds directly near the 3'-end of the 23S rRNA, where it nucleates assembly of the 50S subunit. The polypeptide is Large ribosomal subunit protein uL3 (Chlamydia felis (strain Fe/C-56) (Chlamydophila felis)).